The following is a 336-amino-acid chain: MAELKLGYKASAEQFAPRELVELAVAAEEHGMDSATVSDHFQPWRHEGGHAPFSLAWMTAVGERTTRLQLGTSVLTPTFRYNPAVIAQAFATMGCLYPDRIFLGVGTGEALNEIATGYEGEWPEFKERYARLRESVRLMRELWLGDRVDFEGEYYKTKGASIYDVPEGGIPIYIAAGGPQVAKYAGRAGDGFICTSGKGEELYKEKLIPAMREGAEAAGKNPDDVDRMIEIKISYDTDPELALENTRFWAPLSLTAEQKHSIDDPMEMEKAADELPIEQVAKRWIVASDPDEAVAKVADYVDYGLNHLVFHAPGHDQRRFLELFQRDLEPRLRKLG.

Asp-39 is a coenzyme F420-(gamma-Glu)n binding site. The Proton donor role is filled by His-40. Residues Thr-76 and 107–108 (TG) each bind coenzyme F420-(gamma-Glu)n. Glu-109 serves as the catalytic Proton acceptor. Residues Asn-112, 177–178 (GG), and 180–181 (QV) each bind coenzyme F420-(gamma-Glu)n. Residues Thr-195, Lys-198, Lys-259, and Arg-283 each coordinate substrate.

It belongs to the F420-dependent glucose-6-phosphate dehydrogenase family. In terms of assembly, homodimer.

The catalysed reaction is oxidized coenzyme F420-(gamma-L-Glu)(n) + D-glucose 6-phosphate + H(+) = 6-phospho-D-glucono-1,5-lactone + reduced coenzyme F420-(gamma-L-Glu)(n). Functionally, catalyzes the coenzyme F420-dependent oxidation of glucose 6-phosphate (G6P) to 6-phosphogluconolactone. Appears to have a role in resistance to oxidative stress, via its consumption of G6P that serves as a source of reducing power to combat oxidative stress in mycobacteria. The chain is F420-dependent glucose-6-phosphate dehydrogenase from Mycolicibacterium gilvum (strain PYR-GCK) (Mycobacterium gilvum (strain PYR-GCK)).